The following is a 109-amino-acid chain: Small ribosomal subunit protein uS10 (109 aa).

This sequence belongs to the universal ribosomal protein uS10 family. Part of the 30S ribosomal subunit.

In terms of biological role, involved in the binding of tRNA to the ribosomes. In Nanoarchaeum equitans (strain Kin4-M), this protein is Small ribosomal subunit protein uS10.